A 647-amino-acid polypeptide reads, in one-letter code: Leucine aminopeptidase 2 (647 aa).

Residues 169–171 (QCQ) and 295–300 (PYGGME) contribute to the substrate site. A Zn(2+)-binding site is contributed by H324. E325 (proton acceptor) is an active-site residue. Zn(2+) contacts are provided by H328 and E347. The active-site Proton donor is Y418.

This sequence belongs to the peptidase M1 family. The cofactor is Zn(2+).

The protein resides in the cytoplasm. It is found in the nucleus. The enzyme catalyses an epoxide + H2O = an ethanediol. Aminopeptidase that preferentially cleaves di- and tripeptides. Also has low epoxide hydrolase activity (in vitro). Can hydrolyze the epoxide leukotriene LTA(4) but it forms preferentially 5,6-dihydroxy-7,9,11,14-eicosatetraenoic acid rather than the cytokine leukotriene B(4) as the product compared to the homologous mammalian enzyme (in vitro). This is Leucine aminopeptidase 2 from Yarrowia lipolytica (strain CLIB 122 / E 150) (Yeast).